The following is a 70-amino-acid chain: Protein SlyX homolog (70 aa).

It belongs to the SlyX family.

The chain is Protein SlyX homolog from Shewanella woodyi (strain ATCC 51908 / MS32).